The chain runs to 107 residues: U1-lycotoxin-Ls1w (107 aa).

Residues 1 to 20 (MLKVLVVVALLVTLISYSSS) form the signal peptide. A propeptide spanning residues 21-41 (EGIDDLEADELLSLMANEQTR) is cleaved from the precursor. 4 disulfide bridges follow: Cys-44/Cys-59, Cys-51/Cys-68, Cys-58/Cys-86, and Cys-70/Cys-84.

Belongs to the neurotoxin 19 (CSTX) family. 04 (U1-Lctx) subfamily. As to expression, expressed by the venom gland.

The protein resides in the secreted. The chain is U1-lycotoxin-Ls1w from Lycosa singoriensis (Wolf spider).